We begin with the raw amino-acid sequence, 500 residues long: L-arabinose isomerase (500 aa).

Mn(2+) contacts are provided by Glu306, Glu333, His350, and His450.

Belongs to the arabinose isomerase family. Homohexamer. It depends on Mn(2+) as a cofactor.

It carries out the reaction beta-L-arabinopyranose = L-ribulose. The protein operates within carbohydrate degradation; L-arabinose degradation via L-ribulose; D-xylulose 5-phosphate from L-arabinose (bacterial route): step 1/3. Catalyzes the conversion of L-arabinose to L-ribulose. This is L-arabinose isomerase from Shigella flexneri serotype 5b (strain 8401).